Reading from the N-terminus, the 340-residue chain is GTP 3',8-cyclase (340 aa).

The region spanning 20–246 (RFERQYVYLR…PKALSDGPAK (227 aa)) is the Radical SAM core domain. Residue Arg-29 participates in GTP binding. 2 residues coordinate [4Fe-4S] cluster: Cys-36 and Cys-40. Tyr-42 contacts S-adenosyl-L-methionine. Residue Cys-43 participates in [4Fe-4S] cluster binding. Residue Arg-79 coordinates GTP. Gly-83 provides a ligand contact to S-adenosyl-L-methionine. Thr-110 contributes to the GTP binding site. Ser-134 contacts S-adenosyl-L-methionine. GTP is bound at residue Lys-171. Met-205 contacts S-adenosyl-L-methionine. Residues Cys-268 and Cys-271 each contribute to the [4Fe-4S] cluster site. 273–275 (RLR) provides a ligand contact to GTP. Cys-285 is a [4Fe-4S] cluster binding site.

It belongs to the radical SAM superfamily. MoaA family. As to quaternary structure, monomer and homodimer. [4Fe-4S] cluster is required as a cofactor.

The enzyme catalyses GTP + AH2 + S-adenosyl-L-methionine = (8S)-3',8-cyclo-7,8-dihydroguanosine 5'-triphosphate + 5'-deoxyadenosine + L-methionine + A + H(+). It participates in cofactor biosynthesis; molybdopterin biosynthesis. In terms of biological role, catalyzes the cyclization of GTP to (8S)-3',8-cyclo-7,8-dihydroguanosine 5'-triphosphate. This is GTP 3',8-cyclase from Actinobacillus pleuropneumoniae serotype 7 (strain AP76).